Reading from the N-terminus, the 93-residue chain is Integration host factor subunit beta (93 aa).

Belongs to the bacterial histone-like protein family. In terms of assembly, heterodimer of an alpha and a beta chain.

This protein is one of the two subunits of integration host factor, a specific DNA-binding protein that functions in genetic recombination as well as in transcriptional and translational control. In Mannheimia haemolytica (Pasteurella haemolytica), this protein is Integration host factor subunit beta (ihfB).